The following is a 682-amino-acid chain: Putative L-type lectin-domain containing receptor kinase I.1 (682 aa).

Residues 1-19 (MAQRLHLLLLLFLICFVNL) form the signal peptide. Topologically, residues 20–292 (ISFSSQQDLS…RPKKPEKTSP (273 aa)) are extracellular. The interval 27–264 (DLSFIYNGFN…YQYILGWSFS (238 aa)) is legume-lectin like. 5 N-linked (GlcNAc...) asparagine glycosylation sites follow: N60, N130, N187, N210, and N231. Residues 293–313 (LLIVLLIILAIIVMVVVGGFY) form a helical membrane-spanning segment. Topologically, residues 314–682 (LYRRKKYAEV…SHTIIYGDGR (369 aa)) are cytoplasmic. A Protein kinase domain is found at 348–622 (FNKDGRLGRG…VQYINRHQRL (275 aa)). Residues 354–362 (LGRGGFGEV) and K376 contribute to the ATP site. Residue D472 is the Proton acceptor of the active site.

This sequence in the C-terminal section; belongs to the protein kinase superfamily. Ser/Thr protein kinase family. It in the N-terminal section; belongs to the leguminous lectin family.

It localises to the cell membrane. The enzyme catalyses L-seryl-[protein] + ATP = O-phospho-L-seryl-[protein] + ADP + H(+). It catalyses the reaction L-threonyl-[protein] + ATP = O-phospho-L-threonyl-[protein] + ADP + H(+). Involved in resistance response to the pathogenic fungus Alternaria brassicicola. The chain is Putative L-type lectin-domain containing receptor kinase I.1 from Arabidopsis thaliana (Mouse-ear cress).